The following is a 456-amino-acid chain: Transforming growth factor beta-1-induced transcript 1 protein (456 aa).

Met1 bears the N-acetylmethionine mark. A disordered region spans residues 1-79 (MEDLDALLSD…ATPPFSSSCG (79 aa)). The interval 1 to 195 (MEDLDALLSD…DTPSPPGPTS (195 aa)) is transcription activation. Residues 1-235 (MEDLDALLSD…CNKPIAGQVV (235 aa)) form an interaction with PTK2B/PYK2 region. An LD motif 1 motif is present at residues 3–15 (DLDALLSDLETTT). Thr33 is subject to Phosphothreonine. Tyr55 is subject to Phosphotyrosine. A Phosphoserine modification is found at Ser63. The tract at residues 78 to 131 (CGVLGTGLCELDRLLQELNATQFNITDEIMSQFPSSKETAGEQKEDQSEDKKRP) is interaction with PTK2/FAK1. Residues 87–99 (ELDRLLQELNATQ) carry the LD motif 2 motif. The interval 109–146 (QFPSSKETAGEQKEDQSEDKKRPSPPPSPSPVLPKPSA) is disordered. The segment covering 116–130 (TAGEQKEDQSEDKKR) has biased composition (basic and acidic residues). Residues Ser132, Ser136, Ser138, Ser159, Ser181, and Ser189 each carry the phosphoserine modification. Residues 132–142 (SPPPSPSPVLP) show a composition bias toward pro residues. Positions 152–163 (ELDRLMASLSDF) match the LD motif 3 motif. The disordered stretch occupies residues 166 to 200 (QNHLPASGPTPPPVPSSMSEDTPSPPGPTSKGSLD). Residues 198–210 (SLDTMLGLLQSDL) carry the LD motif 4 motif. LIM zinc-binding domains lie at 221–280 (GLCG…RFSP), 281–338 (RCGL…QLFA), 339–398 (PRCQ…RRGS), and 399–456 (LCAT…KLFG). Phosphoserine is present on Ser398. Residue Thr402 is modified to Phosphothreonine.

It belongs to the paxillin family. In terms of assembly, homooligomer. Interacts with CRIP2, HSPB1, ILK, LIMS1, LIMS2, NCK2, NUDT16L1, PAK, PPARG, PTPN12, TCF3, TCF7L2 and VCL. Forms a complex with GIT1 and ARHGEF7. Interacts with AR/androgen receptor in a ligand-dependent manner. Interacts with CSK, LYN, MAPK15, NR3C1, PPARG, PTK2/FAK1, PTK2B/PYK2, SLC6A3, SLC6A4, SMAD3, SRC and talin. Interacts (via LIM zinc-binding domain 2) with CBLC (via RING-type zinc finger); the interaction is direct and enhances CBLC E3 ubiquitin-protein ligase activity. Phosphorylated by gonadotropin-releasing hormone-activated SRC.

It localises to the cell junction. Its subcellular location is the focal adhesion. It is found in the nucleus matrix. The protein localises to the cytoplasm. The protein resides in the cytoskeleton. Functionally, functions as a molecular adapter coordinating multiple protein-protein interactions at the focal adhesion complex and in the nucleus. Links various intracellular signaling modules to plasma membrane receptors and regulates the Wnt and TGFB signaling pathways. May also regulate SLC6A3 and SLC6A4 targeting to the plasma membrane hence regulating their activity. In the nucleus, functions as a nuclear receptor coactivator regulating glucocorticoid, androgen, mineralocorticoid and progesterone receptor transcriptional activity. May play a role in the processes of cell growth, proliferation, migration, differentiation and senescence. May have a zinc-dependent DNA-binding activity. This chain is Transforming growth factor beta-1-induced transcript 1 protein (TGFB1I1), found in Bos taurus (Bovine).